The primary structure comprises 175 residues: Putative transmembrane protein ORF175 (175 aa).

The next 4 membrane-spanning stretches (helical) occupy residues 14-34, 58-78, 101-121, and 142-162; these read LGIVYGSTLIILLLPLIGSFM, VLSNFGIFGGLALGVGSAIAF, IVVALLVSQFIFGGWATFALF, and ITPFIDGLIATLGGLMVVLSI.

Its subcellular location is the host membrane. The sequence is that of Putative transmembrane protein ORF175 from Acidianus two-tailed virus (ATV).